We begin with the raw amino-acid sequence, 333 residues long: Probable HTH-type transcriptional repressor ExuR (333 aa).

An HTH lacI-type domain is found at V2 to M56. The H-T-H motif DNA-binding region spans I4–N23.

Transcriptional repressor for the exu locus which is required for galacturonate utilization. The polypeptide is Probable HTH-type transcriptional repressor ExuR (exuR) (Bacillus subtilis (strain 168)).